The following is a 240-amino-acid chain: Aquaporin Z (240 aa).

2 consecutive transmembrane segments (helical) span residues 10–30 (AIGT…AAGF) and 35–55 (IGLV…AYAI). The short motif at 64 to 66 (NPA) is the NPA 1 element. The next 3 membrane-spanning stretches (helical) occupy residues 82 to 102 (ILPY…LLYI), 131 to 151 (MMAC…IIMG), and 160 to 180 (GFAP…SIPV). An NPA 2 motif is present at residues 186–188 (NPA). A helical membrane pass occupies residues 194–214 (ALFVGGWAMAQLWLFWVAPLI).

This sequence belongs to the MIP/aquaporin (TC 1.A.8) family. As to quaternary structure, homotetramer.

It is found in the cell inner membrane. The enzyme catalyses H2O(in) = H2O(out). Channel that permits osmotically driven movement of water in both directions. It is involved in the osmoregulation and in the maintenance of cell turgor during volume expansion in rapidly growing cells. It mediates rapid entry or exit of water in response to abrupt changes in osmolarity. In Bradyrhizobium diazoefficiens (strain JCM 10833 / BCRC 13528 / IAM 13628 / NBRC 14792 / USDA 110), this protein is Aquaporin Z.